The chain runs to 315 residues: Rab effector Noc2 (315 aa).

Residues 41-158 (QRRKQHLSPA…KRSGAWFYKG (118 aa)) enclose the RabBD domain. Residues 89–146 (GNGLSQCLLCGEVLGFLGSSSVFCKDCRKKVCTKCGIEASPGQKRPLWLCKICSEQRE) form an FYVE-type zinc finger. Residues cysteine 95, cysteine 98, cysteine 112, cysteine 115, cysteine 120, cysteine 123, cysteine 138, and cysteine 141 each contribute to the Zn(2+) site. The tract at residues 170 to 315 (GRADDPHFRP…APAGPSSCLG (146 aa)) is disordered. 2 stretches are compositionally biased toward basic and acidic residues: residues 184 to 193 (PAEREPRSSE) and 221 to 240 (LEDR…KPWK). Over residues 262–275 (GCQSSLASGETGTG) the composition is skewed to polar residues. A compositionally biased stretch (low complexity) spans 298–315 (GRAPAADAAPAGPSSCLG).

In terms of assembly, recruited to dense-core vesicles through specific interaction with RAB27A in endocrine cells. Interacts with RAB3A, RAB3B, RAB3C and RAB3D. Interacts with ZYX. Moderate to high levels of expression in thyroid, ovary, stomach, heart, pancreas, skeletal muscle, kidney and liver. Also detected in epithelial cells.

Its subcellular location is the cytoplasm. It is found in the cytoplasmic vesicle. It localises to the secretory vesicle membrane. Rab GTPase effector involved in the late steps of regulated exocytosis, both in endocrine and exocrine cells. Acts as a potential RAB3B effector protein in epithelial cells. This is Rab effector Noc2 (RPH3AL) from Homo sapiens (Human).